Here is a 165-residue protein sequence, read N- to C-terminus: Large ribosomal subunit protein uL30 (165 aa).

The protein belongs to the universal ribosomal protein uL30 family. As to quaternary structure, part of the 50S ribosomal subunit.

The chain is Large ribosomal subunit protein uL30 from Thermoplasma acidophilum (strain ATCC 25905 / DSM 1728 / JCM 9062 / NBRC 15155 / AMRC-C165).